The following is a 973-amino-acid chain: Splicing regulator ARVCF (973 aa).

Positions valine 95–threonine 123 are disordered. Residues threonine 103 and threonine 105 each carry the phosphothreonine modification. Over residues threonine 103–aspartate 115 the composition is skewed to polar residues. Residue arginine 171 is modified to Omega-N-methylarginine. 2 disordered regions span residues arginine 233–histidine 254 and arginine 267–arginine 331. A Phosphoserine modification is found at serine 268. Positions alanine 271 to proline 281 are enriched in acidic residues. Basic and acidic residues predominate over residues arginine 289–glutamate 303. Phosphoserine occurs at positions 333, 336, 344, and 346. 6 ARM repeats span residues serine 349 to phenylalanine 388, glutamate 391 to tyrosine 430, alanine 434 to threonine 468, leucine 469 to serine 509, leucine 527 to asparagine 566, and methionine 576 to alanine 623. Positions tyrosine 593–alanine 623 are disordered. Serine 607 is modified (phosphoserine). The Nuclear localization signal motif lies at glutamine 608–lysine 624. At threonine 637 the chain carries Phosphothreonine. ARM repeat units follow at residues proline 641–alanine 681, threonine 694–leucine 733, aspartate 734–asparagine 776, and threonine 777–leucine 821. The interval valine 771 to cysteine 955 is required for interaction with RNA-binding proteins DDX5, HNRNPH2 and SRSF1 and with mRNAs. Residues phenylalanine 844–alanine 926 form a disordered region. Phosphoserine is present on serine 865. Residue threonine 866 is modified to Phosphothreonine. The segment covering lysine 872 to threonine 881 has biased composition (basic and acidic residues).

It belongs to the beta-catenin family. Component of a ribonucleoprotein complex containing mRNAs and RNA-binding proteins including DDX5, HNRNPH2 and SRSF1 as well as ARVCF. Interacts (via the extreme C-terminus) with FRMPD2 (via the PDZ 2 domain). Interacts with CCDC85B. In terms of tissue distribution, expressed in optic nerve sheath envelope (at protein level). Expressed in heart (at protein level).

The protein localises to the cell junction. The protein resides in the adherens junction. It is found in the nucleus. Its subcellular location is the cytoplasm. In terms of biological role, contributes to the regulation of alternative splicing of pre-mRNAs. The chain is Splicing regulator ARVCF from Rattus norvegicus (Rat).